Here is a 59-residue protein sequence, read N- to C-terminus: Large ribosomal subunit protein bL32 (59 aa).

The protein belongs to the bacterial ribosomal protein bL32 family.

The polypeptide is Large ribosomal subunit protein bL32 (Synechococcus sp. (strain JA-2-3B'a(2-13)) (Cyanobacteria bacterium Yellowstone B-Prime)).